A 62-amino-acid chain; its full sequence is Large ribosomal subunit protein uL30 (62 aa).

This sequence belongs to the universal ribosomal protein uL30 family. As to quaternary structure, part of the 50S ribosomal subunit.

The sequence is that of Large ribosomal subunit protein uL30 from Heliobacterium modesticaldum (strain ATCC 51547 / Ice1).